We begin with the raw amino-acid sequence, 587 residues long: Adenine deaminase (587 aa).

Belongs to the metallo-dependent hydrolases superfamily. Adenine deaminase family. Requires Mn(2+) as cofactor.

The catalysed reaction is adenine + H2O + H(+) = hypoxanthine + NH4(+). This chain is Adenine deaminase, found in Shewanella halifaxensis (strain HAW-EB4).